The primary structure comprises 457 residues: Argininosuccinate lyase (457 aa).

It belongs to the lyase 1 family. Argininosuccinate lyase subfamily.

The protein localises to the cytoplasm. It catalyses the reaction 2-(N(omega)-L-arginino)succinate = fumarate + L-arginine. It functions in the pathway amino-acid biosynthesis; L-arginine biosynthesis; L-arginine from L-ornithine and carbamoyl phosphate: step 3/3. This Haemophilus influenzae (strain PittEE) protein is Argininosuccinate lyase.